Reading from the N-terminus, the 200-residue chain is Recombination protein RecR (200 aa).

The C4-type zinc-finger motif lies at Cys57–Cys72. The Toprim domain occupies Gly81–Pro176.

Belongs to the RecR family.

Functionally, may play a role in DNA repair. It seems to be involved in an RecBC-independent recombinational process of DNA repair. It may act with RecF and RecO. In Aliivibrio fischeri (strain ATCC 700601 / ES114) (Vibrio fischeri), this protein is Recombination protein RecR.